The primary structure comprises 241 residues: Proteasome subunit alpha (241 aa).

Belongs to the peptidase T1A family. As to quaternary structure, the 20S proteasome core is composed of 14 alpha and 14 beta subunits that assemble into four stacked heptameric rings, resulting in a barrel-shaped structure. The two inner rings, each composed of seven catalytic beta subunits, are sandwiched by two outer rings, each composed of seven alpha subunits. The catalytic chamber with the active sites is on the inside of the barrel. Has a gated structure, the ends of the cylinder being occluded by the N-termini of the alpha-subunits. Is capped by the proteasome-associated ATPase, ARC.

It localises to the cytoplasm. The protein operates within protein degradation; proteasomal Pup-dependent pathway. With respect to regulation, the formation of the proteasomal ATPase ARC-20S proteasome complex, likely via the docking of the C-termini of ARC into the intersubunit pockets in the alpha-rings, may trigger opening of the gate for substrate entry. Interconversion between the open-gate and close-gate conformations leads to a dynamic regulation of the 20S proteasome proteolysis activity. Its function is as follows. Component of the proteasome core, a large protease complex with broad specificity involved in protein degradation. This chain is Proteasome subunit alpha, found in Parafrankia sp. (strain EAN1pec).